The sequence spans 274 residues: Shikimate dehydrogenase (NADP(+)) (274 aa).

Shikimate-binding positions include 14-16 (SKS) and Thr61. Catalysis depends on Lys65, which acts as the Proton acceptor. Shikimate contacts are provided by Asn86 and Asp102. Residues 126 to 130 (GAGGA), 150 to 155 (NRTAEK), and Met214 each bind NADP(+). Tyr216 is a shikimate binding site. Gly239 contacts NADP(+).

This sequence belongs to the shikimate dehydrogenase family. Homodimer.

The enzyme catalyses shikimate + NADP(+) = 3-dehydroshikimate + NADPH + H(+). The protein operates within metabolic intermediate biosynthesis; chorismate biosynthesis; chorismate from D-erythrose 4-phosphate and phosphoenolpyruvate: step 4/7. Its function is as follows. Involved in the biosynthesis of the chorismate, which leads to the biosynthesis of aromatic amino acids. Catalyzes the reversible NADPH linked reduction of 3-dehydroshikimate (DHSA) to yield shikimate (SA). The protein is Shikimate dehydrogenase (NADP(+)) of Pseudoalteromonas translucida (strain TAC 125).